A 1080-amino-acid polypeptide reads, in one-letter code: Adenylate cyclase type 7 (1080 aa).

Residues 1–33 are Cytoplasmic-facing; sequence MPAKGRYFLNEGEEGPDQDALYEKYQLTSQHGP. A run of 6 helical transmembrane segments spans residues 34–54, 63–83, 95–117, 122–142, 147–167, and 176–196; these read LLLTLLLVAATACVALIIIAF, QAILGMAFLVLAVFAALSVLM, ALALLTWACLVALGYVLVFDAWT, AWEQVPFFLFIVFVVYTLLPF, AVAVGAVSTASHLLVLGSLMG, and VGLQLLANAVIFLCGNLTGAF. Residues 197–594 lie on the Cytoplasmic side of the membrane; that stretch reads HKHQMQDASR…YRLAPIPRAR (398 aa). Positions 279 to 406 constitute a Guanylate cyclase 1 domain; it reads SILYADIVGF…HDVSLANRME (128 aa). Mg(2+)-binding residues include Asp284, Ile285, and Asp328. ATP is bound by residues 284 to 289, 326 to 328, and Arg372; these read DIVGFT and LGD. The interval 454–474 is disordered; it reads DPRSQQPPPPSQHLPRPKGDA. The mediates regulation of adenylate cyclase activity by C5 alpha-induced G- beta and gamma pathway stretch occupies residues 477-482; sequence KMRASV. The mediates regulation of adenylate cyclase activity by sphingosine 1-phosphate-induced G alpha 13 pathway stretch occupies residues 491 to 499; that stretch reads WGAARPFAH. The interval 504 to 546 is disordered; that stretch reads ESVSSGETHVPNGRRPKSVPQRHRRTPDRSMSPKGRSEDDSYD. The tract at residues 506–584 is modulates adenylate cyclase activity by modulating the binding of G(s)alpha to the high-affinity G(s)alpha binding site in 7C1a/7C2; the sequence is VSSGETHVPN…IFLEKGFERE (79 aa). A compositionally biased stretch (basic residues) spans 515–529; that stretch reads NGRRPKSVPQRHRRT. Helical transmembrane passes span 595–615, 620–640, and 669–688; these read HDFACASLIFVCILLVHVLLM, ALGVSFGLVACVLGLVLGLCF, and LTLAVLTIGSLLTVAIINLP. Residue Asn701 is glycosylated (N-linked (GlcNAc...) asparagine). Helical transmembrane passes span 718–737 and 746–773; these read PLPYYTCSCVLGFIACSVFL and VLLTVALVAYLVLFNLSPCWQWDCCGQG. N-linked (GlcNAc...) asparagine glycosylation is found at Asn776 and Asn781. A helical transmembrane segment spans residues 794–814; that stretch reads DLKTMTNFYLVLFYITLLTLS. Over 815 to 1080 the chain is Cytoplasmic; that stretch reads RQIDYYCRLD…TAKFQGLGLN (266 aa). The Guanylate cyclase 2 domain occupies 879-1023; that stretch reads CVMFASVPDF…NTVNVASRME (145 aa). ATP-binding positions include Lys931, 1010-1012, 1017-1021, and Lys1057; these read DIW and NVASR.

Belongs to the adenylyl cyclase class-4/guanylyl cyclase family. Mg(2+) serves as cofactor. Requires Mn(2+) as cofactor. In terms of processing, phosphorylated by PRKCD.

Its subcellular location is the membrane. The enzyme catalyses ATP = 3',5'-cyclic AMP + diphosphate. Its activity is regulated as follows. Activated by the G protein alpha subunit. Activated by the G protein beta and gamma subunit complex. Activated by GNA13 and GNA12. Ethanol and phorbol 12,13-dibutanoate significantly potentiate adenylate cyclase activity generated in response to the activation of the prostanoid receptor by the agonist prostaglandin E1(1-) in a PKC-dependent manner. Inhibited by lithium. In terms of biological role, catalyzes the formation of cAMP in response to activation of G protein-coupled receptors. Functions in signaling cascades activated namely by thrombin and sphingosine 1-phosphate and mediates regulation of cAMP synthesis through synergistic action of the stimulatory G alpha protein with GNA13. Also, during inflammation, mediates zymosan-induced increase intracellular cAMP, leading to protein kinase A pathway activation in order to modulate innate immune responses through heterotrimeric G proteins G(12/13). Functions in signaling cascades activated namely by dopamine and C5 alpha chain and mediates regulation of cAMP synthesis through synergistic action of the stimulatory G protein with G beta:gamma complex. Functions, through cAMP response regulation, to keep inflammation under control during bacterial infection by sensing the presence of serum factors, such as the bioactive lysophospholipid (LPA) that regulate LPS-induced TNF-alpha production. However, it is also required for the optimal functions of B and T cells during adaptive immune responses by regulating cAMP synthesis in both B and T cells. The chain is Adenylate cyclase type 7 from Homo sapiens (Human).